The sequence spans 395 residues: Putative transport protein sll0063 (395 aa).

Helical transmembrane passes span 24–44, 50–70, 91–111, 180–200, 245–265, 269–289, 295–315, and 328–348; these read LNAI…VLNA, IFGY…IAFL, FVFL…IPLA, VFTV…FYLL, ALGL…LFGL, VMAL…FLVA, MALQ…NGIA, and FWVL…GVIV.

Belongs to the autoinducer-2 exporter (AI-2E) (TC 2.A.86) family.

The protein localises to the cell membrane. This Synechocystis sp. (strain ATCC 27184 / PCC 6803 / Kazusa) protein is Putative transport protein sll0063.